Consider the following 276-residue polypeptide: UPF0328 protein ECU08_2080 (276 aa).

Residues 1–24 (MGIIDVQRSHLTATPSKERDAPAH) form a disordered region.

Belongs to the UPF0328 family.

This chain is UPF0328 protein ECU08_2080, found in Encephalitozoon cuniculi (strain GB-M1) (Microsporidian parasite).